A 210-amino-acid chain; its full sequence is Large ribosomal subunit protein uL4 (210 aa).

Residues K44–R54 show a composition bias toward polar residues. The segment at K44 to P94 is disordered. Residues G60–G71 show a composition bias toward basic residues.

Belongs to the universal ribosomal protein uL4 family. As to quaternary structure, part of the 50S ribosomal subunit.

Its function is as follows. One of the primary rRNA binding proteins, this protein initially binds near the 5'-end of the 23S rRNA. It is important during the early stages of 50S assembly. It makes multiple contacts with different domains of the 23S rRNA in the assembled 50S subunit and ribosome. Forms part of the polypeptide exit tunnel. The polypeptide is Large ribosomal subunit protein uL4 (Prochlorococcus marinus subsp. pastoris (strain CCMP1986 / NIES-2087 / MED4)).